A 278-amino-acid polypeptide reads, in one-letter code: MSQAYDPSQEGAKMSYAKDMSYGDYLHMDALLATHHPQSDAHDEMLFIIQHQTSELWMRLVLHELRAARALLLAGGDFRPAFKMLTRVARIFDQLNSAWDVLRTMTPSDYTTFRNALGNSSGFQSHQYRLIEYMLGNRNTAMMKVHEHRPELHAMLAAELEQPSLYHVALRALAAKTGASFAPEVYRMDNPHSADAAVQAAWRQVYEDPAKYWDLYELGEKLVDLEDYFRRWRFNHVTTVERVIGFKRGTGGTSGVQYLRRMLEVELFPELWHLRGDL.

Substrate contacts are provided by residues 47–51 (FIIQH), Tyr110, and Arg114. His236 provides a ligand contact to heme. Residue Thr250 participates in substrate binding.

The protein belongs to the tryptophan 2,3-dioxygenase family. Homotetramer. Heme is required as a cofactor.

The catalysed reaction is L-tryptophan + O2 = N-formyl-L-kynurenine. It functions in the pathway amino-acid degradation; L-tryptophan degradation via kynurenine pathway; L-kynurenine from L-tryptophan: step 1/2. In terms of biological role, heme-dependent dioxygenase that catalyzes the oxidative cleavage of the L-tryptophan (L-Trp) pyrrole ring and converts L-tryptophan to N-formyl-L-kynurenine. Catalyzes the oxidative cleavage of the indole moiety. The sequence is that of Tryptophan 2,3-dioxygenase from Ruegeria pomeroyi (strain ATCC 700808 / DSM 15171 / DSS-3) (Silicibacter pomeroyi).